The chain runs to 339 residues: Trace amine-associated receptor 2 (339 aa).

Over 1 to 36 (MASFEAQQETFDCSEYGNGSCPENERSLGVRAAMYS) the chain is Extracellular. The N-linked (GlcNAc...) asparagine glycan is linked to N18. 2 disulfides stabilise this stretch: C21-C185 and C104-C189. The helical transmembrane segment at 37 to 57 (LMACAIFITIFGNLAMIISIS) threads the bilayer. Topologically, residues 58-67 (YFKQLHTPTN) are cytoplasmic. The helical transmembrane segment at 68-88 (LLILSMAVTDFLLGFTIMPYS) threads the bilayer. Topologically, residues 89–106 (MVRSVENCWYFGLTFCKI) are extracellular. The chain crosses the membrane as a helical span at residues 107-127 (HYSFDLMLSITSIFHLCSVAV). Residues 128-150 (DRFYAICHPLHYCTKMTIPVVRR) are Cytoplasmic-facing. The chain crosses the membrane as a helical span at residues 151-171 (LLLVCWSVPGAFAFGVVFSEA). The Extracellular portion of the chain corresponds to 172-195 (YADGIEGYDILVACSSSCPVMFNK). Residues 196–216 (LWGTTLFVAGFFTPSSMMVGI) traverse the membrane as a helical segment. Residues 217-251 (YGKIFAVSKKHARVIDNLPENQNNQMRKDKKAAKT) are Cytoplasmic-facing. A helical transmembrane segment spans residues 252 to 272 (LGIVMGVFLLCWFPCFFTILL). The Extracellular portion of the chain corresponds to 273–287 (DPFLNFSTPAVLFDA). N277 is a glycosylation site (N-linked (GlcNAc...) asparagine). A helical membrane pass occupies residues 288–310 (LTWFGYFNSTCNPLIYGFFYPWF). Residues 311 to 339 (RRALKYILLGKIFSSHFHNTNLFTQKETE) are Cytoplasmic-facing.

This sequence belongs to the G-protein coupled receptor 1 family. Mainly expressed in neurons of the olfactory epithelium. Also present in the limbic brain areas receiving projection from the olfactory system and several brain regions, including the hippocampus, cerebellum, cortex, raphe nuclei, hypothalamus and habenula.

It is found in the cell membrane. Its function is as follows. Orphan olfactory receptor specific for trace amines. Trace amine compounds are enriched in animal body fluids and act on trace amine-associated receptors (TAARs) to elicit both intraspecific and interspecific innate behaviors. Ligand-binding causes a conformation change that triggers signaling via the G(s)-class of G-proteins which activate adenylate cyclase. May also be required to provide olfactory input into limbic brain areas to regulate emotional behaviors likely via modulation of the dopamine system. This is Trace amine-associated receptor 2 from Mus musculus (Mouse).